A 237-amino-acid polypeptide reads, in one-letter code: Probable glutathione-independent glyoxalase HSP32 (237 aa).

Catalysis depends on residues Cys-138, His-139, and Glu-170.

The protein belongs to the peptidase C56 family. HSP31-like subfamily. As to quaternary structure, homodimer.

The protein resides in the cytoplasm. It localises to the P-body. It carries out the reaction methylglyoxal + H2O = (R)-lactate + H(+). Catalyzes the conversion of methylglyoxal (MG) to D-lactate in a single glutathione (GSH)-independent step. May play a role in detoxifying endogenously produced glyoxals. Involved in protection against reactive oxygen species (ROS). Important for viability in stationary phase. May negatively regulate TORC1 in response to nutrient limitation. This Saccharomyces cerevisiae (strain ATCC 204508 / S288c) (Baker's yeast) protein is Probable glutathione-independent glyoxalase HSP32.